Here is a 184-residue protein sequence, read N- to C-terminus: GTP cyclohydrolase 1 (184 aa).

Zn(2+) contacts are provided by cysteine 75, histidine 78, and cysteine 146.

Belongs to the GTP cyclohydrolase I family. As to quaternary structure, toroid-shaped homodecamer, composed of two pentamers of five dimers.

The catalysed reaction is GTP + H2O = 7,8-dihydroneopterin 3'-triphosphate + formate + H(+). Its pathway is cofactor biosynthesis; 7,8-dihydroneopterin triphosphate biosynthesis; 7,8-dihydroneopterin triphosphate from GTP: step 1/1. The chain is GTP cyclohydrolase 1 from Streptococcus pneumoniae serotype 2 (strain D39 / NCTC 7466).